Reading from the N-terminus, the 384-residue chain is Lipoyl synthase 2, chloroplastic (384 aa).

Residues 1-48 (MAAYCSRVYHHHPVSPSTMQGSLARPSIHAGSASLTFRARPNSVSIVR) constitute a chloroplast transit peptide. [4Fe-4S] cluster-binding residues include Cys108, Cys113, Cys119, Cys145, Cys149, Cys152, and Ser360. Positions 128-349 (GDGDGIATAT…KEYGESLGFL (222 aa)) constitute a Radical SAM core domain.

The protein belongs to the radical SAM superfamily. Lipoyl synthase family. [4Fe-4S] cluster is required as a cofactor.

It is found in the plastid. The protein resides in the chloroplast. It catalyses the reaction [[Fe-S] cluster scaffold protein carrying a second [4Fe-4S](2+) cluster] + N(6)-octanoyl-L-lysyl-[protein] + 2 oxidized [2Fe-2S]-[ferredoxin] + 2 S-adenosyl-L-methionine + 4 H(+) = [[Fe-S] cluster scaffold protein] + N(6)-[(R)-dihydrolipoyl]-L-lysyl-[protein] + 4 Fe(3+) + 2 hydrogen sulfide + 2 5'-deoxyadenosine + 2 L-methionine + 2 reduced [2Fe-2S]-[ferredoxin]. It participates in protein modification; protein lipoylation via endogenous pathway; protein N(6)-(lipoyl)lysine from octanoyl-[acyl-carrier-protein]: step 2/2. In terms of biological role, catalyzes the radical-mediated insertion of two sulfur atoms into the C-6 and C-8 positions of the octanoyl moiety bound to the lipoyl domains of lipoate-dependent enzymes, thereby converting the octanoylated domains into lipoylated derivatives. This chain is Lipoyl synthase 2, chloroplastic, found in Oryza sativa subsp. indica (Rice).